A 1159-amino-acid polypeptide reads, in one-letter code: ATP-dependent helicase/deoxyribonuclease subunit B (1159 aa).

Position 8-15 (8-15 (GRAGSGKT)) interacts with ATP. The [4Fe-4S] cluster site is built by Cys-784, Cys-1102, Cys-1105, and Cys-1111. Residues 1140–1159 (VKEDGSQVDGRTEGSDNNEG) form a disordered region.

The protein belongs to the helicase family. AddB/RexB type 1 subfamily. Heterodimer of AddA and AddB. Mg(2+) is required as a cofactor. It depends on [4Fe-4S] cluster as a cofactor.

The heterodimer acts as both an ATP-dependent DNA helicase and an ATP-dependent, dual-direction single-stranded exonuclease. Recognizes the chi site generating a DNA molecule suitable for the initiation of homologous recombination. The AddB subunit has 5' -&gt; 3' nuclease activity but not helicase activity. This is ATP-dependent helicase/deoxyribonuclease subunit B from Caldanaerobacter subterraneus subsp. tengcongensis (strain DSM 15242 / JCM 11007 / NBRC 100824 / MB4) (Thermoanaerobacter tengcongensis).